Reading from the N-terminus, the 925-residue chain is Isoleucine--tRNA ligase (925 aa).

The 'HIGH' region motif lies at 57–67; sequence PYANGDIHIGH. Glutamate 553 is a binding site for L-isoleucyl-5'-AMP. The 'KMSKS' region motif lies at 594-598; that stretch reads KMSKS. Residue lysine 597 participates in ATP binding. Zn(2+) contacts are provided by cysteine 889, cysteine 892, cysteine 909, and cysteine 912.

This sequence belongs to the class-I aminoacyl-tRNA synthetase family. IleS type 1 subfamily. As to quaternary structure, monomer. Requires Zn(2+) as cofactor.

The protein resides in the cytoplasm. The enzyme catalyses tRNA(Ile) + L-isoleucine + ATP = L-isoleucyl-tRNA(Ile) + AMP + diphosphate. In terms of biological role, catalyzes the attachment of isoleucine to tRNA(Ile). As IleRS can inadvertently accommodate and process structurally similar amino acids such as valine, to avoid such errors it has two additional distinct tRNA(Ile)-dependent editing activities. One activity is designated as 'pretransfer' editing and involves the hydrolysis of activated Val-AMP. The other activity is designated 'posttransfer' editing and involves deacylation of mischarged Val-tRNA(Ile). This Brevibacillus brevis (strain 47 / JCM 6285 / NBRC 100599) protein is Isoleucine--tRNA ligase.